We begin with the raw amino-acid sequence, 440 residues long: Glycerophosphocholine cholinephosphodiesterase ENPP6 (440 aa).

Residues 1–22 (MAGKLWTFLLLFGFSWVWPASA) form the signal peptide. 3 residues coordinate substrate: aspartate 32, serine 71, and asparagine 92. The Zn(2+) site is built by aspartate 32 and serine 71. The active-site Nucleophile is serine 71. Phosphoserine is present on serine 71. Residues asparagine 100 and asparagine 118 are each glycosylated (N-linked (GlcNAc...) asparagine). A disulfide bridge links cysteine 142 with cysteine 154. Aspartate 193 contributes to the substrate binding site. Zn(2+)-binding residues include aspartate 193, histidine 197, aspartate 240, and histidine 241. Histidine 241 lines the substrate pocket. Residue asparagine 341 is glycosylated (N-linked (GlcNAc...) asparagine). Histidine 354 lines the substrate pocket. Residue histidine 354 coordinates Zn(2+). Asparagine 404 carries N-linked (GlcNAc...) asparagine glycosylation. The GPI-anchor amidated serine moiety is linked to residue serine 419. Positions 420–440 (SSPSIPPNSCALVLILLLYFV) are cleaved as a propeptide — removed in mature form.

This sequence belongs to the nucleotide pyrophosphatase/phosphodiesterase family. In terms of assembly, homodimer; disulfide-linked. Homotetramer. It depends on Zn(2+) as a cofactor.

Its subcellular location is the cell membrane. It carries out the reaction sn-glycerol 3-phosphocholine + H2O = phosphocholine + glycerol + H(+). It catalyses the reaction a 1-acyl-sn-glycero-3-phosphocholine + H2O = a 1-acyl-sn-glycerol + phosphocholine + H(+). The enzyme catalyses a 1-O-alkyl-sn-glycero-3-phosphocholine + H2O = a 1-O-alkyl-sn-glycerol + phosphocholine + H(+). The catalysed reaction is 1-dodecanoyl-sn-glycero-3-phosphocholine + H2O = 1-dodecanoyl-sn-glycerol + phosphocholine + H(+). It carries out the reaction 1-hexadecanoyl-sn-glycero-3-phosphocholine + H2O = 1-hexadecanoyl-sn-glycerol + phosphocholine + H(+). It catalyses the reaction 1-(5Z,8Z,11Z,14Z-eicosatetraenoyl)-sn-glycero-3-phosphocholine + H2O = 1-(5Z,8Z,11Z,14Z-eicosatetraenoyl)-sn-glycerol + phosphocholine + H(+). The enzyme catalyses 1-tetradecanoyl-sn-glycero-3-phosphocholine + H2O = 1-tetradecanoyl-sn-glycerol + phosphocholine + H(+). The catalysed reaction is sphing-4-enine-phosphocholine + H2O = sphing-4-enine + phosphocholine + H(+). It carries out the reaction 1-(9Z-octadecenoyl)-sn-glycero-3-phosphocholine + H2O = 1-(9Z-octadecenoyl)-sn-glycerol + phosphocholine + H(+). It catalyses the reaction 1-(9Z,12Z)-octadecadienoyl-sn-glycero-3-phosphocholine + H2O = 1-(9Z,12Z-octadecadienoyl)-sn-glycerol + phosphocholine + H(+). The enzyme catalyses glycero-2-phosphocholine + H2O = phosphocholine + glycerol + H(+). Its activity is regulated as follows. Inhibited by EDTA and EGTA in vitro. Functionally, choline-specific glycerophosphodiesterase that hydrolyzes glycerophosphocholine (GPC) and lysophosphatidylcholine (LPC) and contributes to supplying choline to the cells. Has a preference for LPC with short (12:0 and 14:0) or polyunsaturated (18:2 and 20:4) fatty acids. In vitro, hydrolyzes only choline-containing lysophospholipids, such as sphingosylphosphorylcholine (SPC), platelet-activating factor (PAF) and lysoPAF, but not other lysophospholipids. The sequence is that of Glycerophosphocholine cholinephosphodiesterase ENPP6 from Rattus norvegicus (Rat).